A 1523-amino-acid chain; its full sequence is WD repeat-containing protein 62 (1523 aa).

Position 2 is an N-acetylalanine (Ala-2). At Ser-33 the chain carries Phosphoserine. Thr-46 is modified (phosphothreonine). 12 WD repeats span residues 109–150 (TTRK…QVAE), 153–194 (GHKY…VVAS), 196–234 (KVSCRVIALSFSEDSSYFVTVGNRHVRFWFLEASTEAKV), 291–330 (INLKVSLSSCLCVSDELIFCGCTDGIVRIFQAHSLLYLTN), 357–396 (AVYPDTVALTFDPVHQWLSCVYKDHSIYIWDVKDIDEVSK), 411–450 (EVYPEFEDQRACLPSGTFLTCSSDNTIRFWNLDSASDTRW), 490–529 (DMKAGVRVMQVSPDGQHLASGDRSGNLRIHELHFMDELIK), 532–574 (AHDA…NLEQ), 578–618 (DHSS…DGLH), 626–665 (AEKTTLYDMDIDITQKYVAVACQDRNVRVYNTVSGKQKKC), 671–713 (GDEG…KMFG), and 714–752 (HSEIVTGMKFTYDCRHLITVSGDSCVFIWHLGPEITTCM). A Phosphoserine modification is found at Ser-501. Positions 762-824 (QEQQQQPKDQ…PSKDSLDPDP (63 aa)) are disordered. Positions 776 to 790 (PPSQETYASTPSEIR) are enriched in polar residues. The span at 797-809 (QTEDEMEEECEPE) shows a compositional bias: acidic residues. One copy of the WD 13 repeat lies at 803–846 (EEECEPEELLKTPSKDSLDPDPRCLLTNGKLPLWAKRLLGDDDV). Positions 810–824 (ELLKTPSKDSLDPDP) are enriched in basic and acidic residues. Residues Ser-966 and Ser-972 each carry the phosphoserine modification. Residues 1000-1072 (VSSVSSKDQS…GLGNGSLPQT (73 aa)) form a disordered region. Thr-1072 is subject to Phosphothreonine. Phosphoserine occurs at positions 1117, 1143, and 1169. The disordered stretch occupies residues 1143-1258 (SPEAQPVGQG…SLHKPLSPGQ (116 aa)). Polar residues-rich tracts occupy residues 1167–1177 (YMSSDGTNVLS) and 1199–1213 (TSVLTTGREQSISAP). Residues 1214-1225 (SSCSYLESTTSS) are compositionally biased toward low complexity. Residues 1226 to 1235 (HAKTTRSISL) are compositionally biased toward polar residues. Ser-1234 bears the Phosphoserine mark.

In terms of assembly, can form homodimers (via C-terminus). Interacts (via C-terminus) with MAPKBP1 (via C-terminus). Interacts with CDK5RAP2, CEP152, CEP63 and KIAA0753. CEP63, CDK5RAP2, CEP152, WDR62 are proposed to form a stepwise assembled complex at the centrosome forming a ring near parental centrioles. As to expression, prominent in neural crest lineages from 9.5 dpc to 11.5 dpc. Also expressed in the ventricular and subventricular zones during the period of cerebral cortical neurogenesis (11.5-16.5 dpc), with expression decreasing in intensity by 17.5 dpc. In the cerebellum, it is strongly expressed in precursors of granule neurons at late embryonic and early postnatal stages; by postnatal day 9 (P9). Present in fetal brain, enriched within the ventricular and subventricular zone (at protein level).

Its subcellular location is the nucleus. It localises to the cytoplasm. The protein resides in the cytoskeleton. The protein localises to the spindle pole. It is found in the microtubule organizing center. Its subcellular location is the centrosome. It localises to the centriole. Its function is as follows. Required for cerebral cortical development. Plays a role in neuronal proliferation and migration. Plays a role in mother-centriole-dependent centriole duplication; the function seems also to involve CEP152, CDK5RAP2 and CEP63 through a stepwise assembled complex at the centrosome that recruits CDK2 required for centriole duplication. This chain is WD repeat-containing protein 62 (Wdr62), found in Mus musculus (Mouse).